A 293-amino-acid chain; its full sequence is Glycine betaine-binding protein OpuAC (293 aa).

The first 20 residues, 1–20, serve as a signal peptide directing secretion; the sequence is MLKKIIGIGVSAMLALSLAA. Cys-21 is lipidated: N-palmitoyl cysteine. The S-diacylglycerol cysteine moiety is linked to residue Cys-21.

As to quaternary structure, the complex is composed of two ATP-binding proteins (OpuAA), two transmembrane proteins (OpuAB) and a solute-binding protein (OpuAC). Interacts with FloT.

Its subcellular location is the cell membrane. The protein localises to the membrane raft. Its function is as follows. Involved in a multicomponent binding-protein-dependent transport system for glycine betaine. This chain is Glycine betaine-binding protein OpuAC (opuAC), found in Bacillus subtilis (strain 168).